A 194-amino-acid polypeptide reads, in one-letter code: Large ribosomal subunit protein bL25 (194 aa).

The protein belongs to the bacterial ribosomal protein bL25 family. CTC subfamily. Part of the 50S ribosomal subunit; part of the 5S rRNA/L5/L18/L25 subcomplex. Contacts the 5S rRNA. Binds to the 5S rRNA independently of L5 and L18.

This is one of the proteins that binds to the 5S RNA in the ribosome where it forms part of the central protuberance. This is Large ribosomal subunit protein bL25 from Geotalea uraniireducens (strain Rf4) (Geobacter uraniireducens).